A 560-amino-acid chain; its full sequence is Zinc finger protein 619 (560 aa).

10 C2H2-type zinc fingers span residues 188–210 (YKCG…QRVH), 216–238 (YTCK…QKIH), 244–266 (YSCE…QKLH), 272–294 (YECT…QRIH), 300–322 (FKCK…ERIH), 328–350 (YECK…QRIH), 356–378 (YECK…QRFH), 384–406 (YKCN…QRIH), 412–434 (YECQ…QRVH), and 440–462 (YECK…QKWH).

The protein belongs to the krueppel C2H2-type zinc-finger protein family.

The protein localises to the nucleus. In terms of biological role, may be involved in transcriptional regulation. This is Zinc finger protein 619 (ZNF619) from Homo sapiens (Human).